Consider the following 835-residue polypeptide: Ribonucleoside-diphosphate reductase large subunit (835 aa).

The tract at residues 1-39 is disordered; sequence MPPRAPRPAGAVSPPFPPLAGPPLKARAPRARDSPLTSP. Residues threonine 262, 277-278, glycine 308, 489-493, and 666-670 contribute to the substrate site; these read SC, NLCTE, and PTVSS. An intrachain disulfide couples cysteine 278 to cysteine 506. Catalysis depends on asparagine 489, which acts as the Proton acceptor. Catalysis depends on cysteine 491, which acts as the Cysteine radical intermediate. The active-site Proton acceptor is the glutamate 493.

The protein belongs to the ribonucleoside diphosphate reductase large chain family. As to quaternary structure, heterotetramer composed of a homodimer of the large subunit (R1) and a homodimer of the small subunit (R2). Larger multisubunit protein complex are also active, composed of (R1)n(R2)n.

It catalyses the reaction a 2'-deoxyribonucleoside 5'-diphosphate + [thioredoxin]-disulfide + H2O = a ribonucleoside 5'-diphosphate + [thioredoxin]-dithiol. Ribonucleoside-diphosphate reductase holoenzyme provides the precursors necessary for viral DNA synthesis. Allows virus growth in non-dividing cells, as well as reactivation from latency in infected hosts. Catalyzes the biosynthesis of deoxyribonucleotides from the corresponding ribonucleotides. The sequence is that of Ribonucleoside-diphosphate reductase large subunit from Suid herpesvirus 1 (strain Kaplan) (SuHV-1).